The sequence spans 569 residues: Endonuclease/exonuclease/phosphatase family domain-containing protein 1 (569 aa).

Residue glycine 2 is the site of N-myristoyl glycine attachment. 2 positions are modified to phosphoserine: serine 16 and serine 25. The HhH domain maps to 38-67 (ERLNINTATEEELMTLPGVTRAVARSIVEY). Serine 106, serine 110, serine 160, and serine 173 each carry phosphoserine. The disordered stretch occupies residues 200-224 (SRPPSTHTNGGLTFTAKPHPSPTSL). Positions 202-211 (PPSTHTNGGL) are enriched in polar residues. The residue at position 265 (threonine 265) is a Phosphothreonine. The interval 549–569 (VPRNGNGVTLEPSEANIKHER) is disordered.

This chain is Endonuclease/exonuclease/phosphatase family domain-containing protein 1 (Eepd1), found in Mus musculus (Mouse).